Reading from the N-terminus, the 92-residue chain is UPF0250 protein COSY_0496 (92 aa).

This sequence belongs to the UPF0250 family.

This Vesicomyosocius okutanii subsp. Calyptogena okutanii (strain HA) protein is UPF0250 protein COSY_0496.